The sequence spans 149 residues: Transcriptional repressor NrdR (149 aa).

A zinc finger spans residues 3–34 (CPFCFAVDTKVIDSRLVGGGSSVRRRRQCLVC). One can recognise an ATP-cone domain in the interval 49–139 (PRVVKSNDVR…VYRSFEDIKE (91 aa)).

The protein belongs to the NrdR family. Zn(2+) is required as a cofactor.

In terms of biological role, negatively regulates transcription of bacterial ribonucleotide reductase nrd genes and operons by binding to NrdR-boxes. The sequence is that of Transcriptional repressor NrdR from Shigella boydii serotype 18 (strain CDC 3083-94 / BS512).